Here is a 200-residue protein sequence, read N- to C-terminus: Recombination protein RecR (200 aa).

The segment at 58–73 (CQKCHNISDTTLCSIC) adopts a C4-type zinc-finger fold. A Toprim domain is found at 81–176 (GLICVVENIQ…KLSNIARGVA (96 aa)).

The protein belongs to the RecR family.

In terms of biological role, may play a role in DNA repair. It seems to be involved in an RecBC-independent recombinational process of DNA repair. It may act with RecF and RecO. This is Recombination protein RecR from Amoebophilus asiaticus (strain 5a2).